Here is a 235-residue protein sequence, read N- to C-terminus: Octanoyltransferase LIP2, mitochondrial (235 aa).

Residues 1-32 (MRSPRTLEVWKLGTVNYLKSLKLQEKLVSERK) constitute a mitochondrion transit peptide. The region spanning 34–218 (HQIPDTLLSL…CLAKAFSYDD (185 aa)) is the BPL/LPL catalytic domain. Residues 79–86 (RGGDITFH), 147–149 (AIG), and 160–162 (GLA) each bind substrate. Catalysis depends on cysteine 178, which acts as the Acyl-thioester intermediate.

The protein belongs to the LipB family. In terms of tissue distribution, expressed in leaves. Expressed in roots, rosette leaves, cauline leaves, stems and siliques.

The protein localises to the mitochondrion. The enzyme catalyses octanoyl-[ACP] + L-lysyl-[protein] = N(6)-octanoyl-L-lysyl-[protein] + holo-[ACP] + H(+). It functions in the pathway protein modification; protein lipoylation via endogenous pathway; protein N(6)-(lipoyl)lysine from octanoyl-[acyl-carrier-protein]: step 1/2. Catalyzes the transfer of endogenously produced octanoic acid from octanoyl-acyl-carrier-protein onto the lipoyl domains of lipoate-dependent enzymes. Lipoyl-ACP can also act as a substrate although octanoyl-ACP is likely to be the physiological substrate. Together with LIP1 is essential for mitochondrial protein lipoylation during seed development. Required for the lipoylation of mitochondrial 2-oxoglutarate dehydrogenase component E2 proteins in leaves and roots. The sequence is that of Octanoyltransferase LIP2, mitochondrial from Arabidopsis thaliana (Mouse-ear cress).